A 390-amino-acid polypeptide reads, in one-letter code: Succinyl-diaminopimelate desuccinylase (390 aa).

A Zn(2+)-binding site is contributed by histidine 74. The active site involves aspartate 76. Aspartate 107 contributes to the Zn(2+) binding site. Glutamate 140 serves as the catalytic Proton acceptor. Zn(2+)-binding residues include glutamate 141, glutamate 169, and histidine 363.

It belongs to the peptidase M20A family. DapE subfamily. As to quaternary structure, homodimer. Zn(2+) is required as a cofactor. The cofactor is Co(2+).

The enzyme catalyses N-succinyl-(2S,6S)-2,6-diaminopimelate + H2O = (2S,6S)-2,6-diaminopimelate + succinate. It functions in the pathway amino-acid biosynthesis; L-lysine biosynthesis via DAP pathway; LL-2,6-diaminopimelate from (S)-tetrahydrodipicolinate (succinylase route): step 3/3. In terms of biological role, catalyzes the hydrolysis of N-succinyl-L,L-diaminopimelic acid (SDAP), forming succinate and LL-2,6-diaminopimelate (DAP), an intermediate involved in the bacterial biosynthesis of lysine and meso-diaminopimelic acid, an essential component of bacterial cell walls. This chain is Succinyl-diaminopimelate desuccinylase, found in Bartonella henselae (strain ATCC 49882 / DSM 28221 / CCUG 30454 / Houston 1) (Rochalimaea henselae).